The following is a 364-amino-acid chain: Chorismate synthase (364 aa).

An NADP(+)-binding site is contributed by Arg48. FMN is bound by residues 131–133 (RAS), 243–244 (NA), Gly288, 303–307 (KPTSS), and Arg329.

It belongs to the chorismate synthase family. As to quaternary structure, homotetramer. The cofactor is FMNH2.

The catalysed reaction is 5-O-(1-carboxyvinyl)-3-phosphoshikimate = chorismate + phosphate. It participates in metabolic intermediate biosynthesis; chorismate biosynthesis; chorismate from D-erythrose 4-phosphate and phosphoenolpyruvate: step 7/7. Its function is as follows. Catalyzes the anti-1,4-elimination of the C-3 phosphate and the C-6 proR hydrogen from 5-enolpyruvylshikimate-3-phosphate (EPSP) to yield chorismate, which is the branch point compound that serves as the starting substrate for the three terminal pathways of aromatic amino acid biosynthesis. This reaction introduces a second double bond into the aromatic ring system. In Bartonella bacilliformis (strain ATCC 35685 / KC583 / Herrer 020/F12,63), this protein is Chorismate synthase.